We begin with the raw amino-acid sequence, 398 residues long: 8-amino-7-oxononanoate synthase (398 aa).

A substrate-binding site is contributed by Arg-23. 110–111 (GY) is a binding site for pyridoxal 5'-phosphate. A substrate-binding site is contributed by His-135. Pyridoxal 5'-phosphate is bound by residues Ser-181, His-209, and Thr-237. Lys-240 is subject to N6-(pyridoxal phosphate)lysine. Thr-354 lines the substrate pocket.

The protein belongs to the class-II pyridoxal-phosphate-dependent aminotransferase family. BioF subfamily. Homodimer. Pyridoxal 5'-phosphate is required as a cofactor.

It carries out the reaction 6-carboxyhexanoyl-[ACP] + L-alanine + H(+) = (8S)-8-amino-7-oxononanoate + holo-[ACP] + CO2. It functions in the pathway cofactor biosynthesis; biotin biosynthesis. Catalyzes the decarboxylative condensation of pimeloyl-[acyl-carrier protein] and L-alanine to produce 8-amino-7-oxononanoate (AON), [acyl-carrier protein], and carbon dioxide. In Anaeromyxobacter sp. (strain K), this protein is 8-amino-7-oxononanoate synthase.